Reading from the N-terminus, the 319-residue chain is 7,8-didemethyl-8-hydroxy-5-deazariboflavin synthase (319 aa).

The Radical SAM core domain occupies 5-236 (VTYSPAYTIV…SNITLQIPPN (232 aa)). [4Fe-4S] cluster is bound by residues C19, C23, and C26.

The protein belongs to the radical SAM superfamily. CofG family. As to quaternary structure, consists of two subunits, CofG and CofH. [4Fe-4S] cluster is required as a cofactor.

It carries out the reaction 5-amino-5-(4-hydroxybenzyl)-6-(D-ribitylimino)-5,6-dihydrouracil + S-adenosyl-L-methionine = 7,8-didemethyl-8-hydroxy-5-deazariboflavin + 5'-deoxyadenosine + L-methionine + NH4(+) + H(+). It participates in cofactor biosynthesis; coenzyme F0 biosynthesis. Catalyzes the radical-mediated synthesis of 7,8-didemethyl-8-hydroxy-5-deazariboflavin from 5-amino-5-(4-hydroxybenzyl)-6-(D-ribitylimino)-5,6-dihydrouracil. The chain is 7,8-didemethyl-8-hydroxy-5-deazariboflavin synthase from Trichodesmium erythraeum (strain IMS101).